Reading from the N-terminus, the 324-residue chain is Casein kinase I (324 aa).

The Protein kinase domain maps to 9–278 (YALGKKLGSG…LRRLLKDLFI (270 aa)). Residues 15–23 (LGSGSFGDI) and Lys-38 each bind ATP. The active-site Proton acceptor is Asp-128.

This sequence belongs to the protein kinase superfamily. CK1 Ser/Thr protein kinase family. Casein kinase I subfamily. In terms of assembly, interacts with rhoptry protein RON3; the interaction is direct. Interacts with CK2alpha; the interaction is direct. Interacts with nucleosome assembly protein NAPL. Interacts with RAB5b. Interacts with host GAPVD1. Interacts with host SNX22. Requires Mg(2+) as cofactor.

Its subcellular location is the cytoplasm. The protein localises to the cytoplasmic vesicle. It localises to the secretory vesicle. The protein resides in the microneme. It is found in the secreted. Its subcellular location is the host cell surface. The enzyme catalyses L-seryl-[protein] + ATP = O-phospho-L-seryl-[protein] + ADP + H(+). It catalyses the reaction L-threonyl-[protein] + ATP = O-phospho-L-threonyl-[protein] + ADP + H(+). Serine/threonine-protein kinase likely to be involved in many cellular processes. Phosphorylates rhoptry protein RON3, nucleosome assembly protein NAPL and DNA/RNA-binding protein ALBA4 in vitro. In Plasmodium falciparum (isolate Dd2), this protein is Casein kinase I.